Here is a 124-residue protein sequence, read N- to C-terminus: Small ribosomal subunit protein uS12 (124 aa).

The residue at position 89 (D89) is a 3-methylthioaspartic acid.

The protein belongs to the universal ribosomal protein uS12 family. In terms of assembly, part of the 30S ribosomal subunit. Contacts proteins S8 and S17. May interact with IF1 in the 30S initiation complex.

With S4 and S5 plays an important role in translational accuracy. Its function is as follows. Interacts with and stabilizes bases of the 16S rRNA that are involved in tRNA selection in the A site and with the mRNA backbone. Located at the interface of the 30S and 50S subunits, it traverses the body of the 30S subunit contacting proteins on the other side and probably holding the rRNA structure together. The combined cluster of proteins S8, S12 and S17 appears to hold together the shoulder and platform of the 30S subunit. This Aliivibrio fischeri (strain ATCC 700601 / ES114) (Vibrio fischeri) protein is Small ribosomal subunit protein uS12.